We begin with the raw amino-acid sequence, 155 residues long: Interleukin-2 (155 aa).

An N-terminal signal peptide occupies residues 1–20 (MYKIQLLSCIALTLALVANG). The O-linked (GalNAc...) threonine glycan is linked to T23. An intrachain disulfide couples C79 to C127.

The protein belongs to the IL-2 family.

The protein resides in the secreted. Functionally, cytokine produced by activated CD4-positive helper T-cells and to a lesser extend activated CD8-positive T-cells and natural killer (NK) cells that plays pivotal roles in the immune response and tolerance. Binds to a receptor complex composed of either the high-affinity trimeric IL-2R (IL2RA/CD25, IL2RB/CD122 and IL2RG/CD132) or the low-affinity dimeric IL-2R (IL2RB and IL2RG). Interaction with the receptor leads to oligomerization and conformation changes in the IL-2R subunits resulting in downstream signaling starting with phosphorylation of JAK1 and JAK3. In turn, JAK1 and JAK3 phosphorylate the receptor to form a docking site leading to the phosphorylation of several substrates including STAT5. This process leads to activation of several pathways including STAT, phosphoinositide-3-kinase/PI3K and mitogen-activated protein kinase/MAPK pathways. Functions as a T-cell growth factor and can increase NK-cell cytolytic activity as well. Promotes strong proliferation of activated B-cells and subsequently immunoglobulin production. Plays a pivotal role in regulating the adaptive immune system by controlling the survival and proliferation of regulatory T-cells, which are required for the maintenance of immune tolerance. Moreover, participates in the differentiation and homeostasis of effector T-cell subsets, including Th1, Th2, Th17 as well as memory CD8-positive T-cells. The chain is Interleukin-2 (IL2) from Bubalus bubalis (Domestic water buffalo).